The sequence spans 256 residues: Ubiquinone/menaquinone biosynthesis C-methyltransferase UbiE (256 aa).

S-adenosyl-L-methionine is bound by residues T79, D100, and 128–129 (DA).

This sequence belongs to the class I-like SAM-binding methyltransferase superfamily. MenG/UbiE family.

The enzyme catalyses a 2-demethylmenaquinol + S-adenosyl-L-methionine = a menaquinol + S-adenosyl-L-homocysteine + H(+). It catalyses the reaction a 2-methoxy-6-(all-trans-polyprenyl)benzene-1,4-diol + S-adenosyl-L-methionine = a 5-methoxy-2-methyl-3-(all-trans-polyprenyl)benzene-1,4-diol + S-adenosyl-L-homocysteine + H(+). The protein operates within quinol/quinone metabolism; menaquinone biosynthesis; menaquinol from 1,4-dihydroxy-2-naphthoate: step 2/2. It participates in cofactor biosynthesis; ubiquinone biosynthesis. Its function is as follows. Methyltransferase required for the conversion of demethylmenaquinol (DMKH2) to menaquinol (MKH2) and the conversion of 2-polyprenyl-6-methoxy-1,4-benzoquinol (DDMQH2) to 2-polyprenyl-3-methyl-6-methoxy-1,4-benzoquinol (DMQH2). This chain is Ubiquinone/menaquinone biosynthesis C-methyltransferase UbiE, found in Pseudomonas savastanoi pv. phaseolicola (strain 1448A / Race 6) (Pseudomonas syringae pv. phaseolicola (strain 1448A / Race 6)).